A 488-amino-acid polypeptide reads, in one-letter code: Argininosuccinate lyase (488 aa).

Belongs to the lyase 1 family. Argininosuccinate lyase subfamily.

The protein localises to the cytoplasm. The catalysed reaction is 2-(N(omega)-L-arginino)succinate = fumarate + L-arginine. It functions in the pathway amino-acid biosynthesis; L-arginine biosynthesis; L-arginine from L-ornithine and carbamoyl phosphate: step 3/3. In Corynebacterium jeikeium (strain K411), this protein is Argininosuccinate lyase.